We begin with the raw amino-acid sequence, 138 residues long: RuBisCO chaperone RbcX (138 aa).

The disordered stretch occupies residues 118–138 (VDNFPSETSNGESNNNDSPPS). A compositionally biased stretch (polar residues) spans 122–138 (PSETSNGESNNNDSPPS).

The protein belongs to the RbcX family. Homodimer. Interacts with the exposed C-terminal peptide of RbcL via its central cleft, contacts a second RbcL monomer via its peripheral polar surface.

It localises to the carboxysome. Its subcellular location is the cytoplasm. In terms of biological role, an RbcL-specific chaperone. The central cleft of the RbcX homodimer (RbcX2) binds the C-terminus of an RbcL monomer, stabilizing the C-terminus and probably preventing its reassociation with chaperonin GroEL-ES. At the same time the peripheral region of RbcX2 binds a second RbcL monomer, bridging the RbcL homodimers in the correct orientation. The RbcX2(2)-bound RbcL dimers then assemble into the RbcL8 core (RbcL8-(RbcX2)8). RbcS binding triggers the release of RbcX2. In Synechocystis sp. (strain ATCC 27184 / PCC 6803 / Kazusa), this protein is RuBisCO chaperone RbcX.